A 225-amino-acid chain; its full sequence is Peptidyl-tRNA hydrolase (225 aa).

Y14 provides a ligand contact to tRNA. H19 acts as the Proton acceptor in catalysis. 3 residues coordinate tRNA: F64, N66, and N112. Positions 182–225 (AVALRMQPPKPEKPKPAAKAPEAQAPEAAPDERSALQKLADRFR) are disordered. Residues 198 to 209 (AAKAPEAQAPEA) are compositionally biased toward low complexity. Positions 211 to 225 (PDERSALQKLADRFR) are enriched in basic and acidic residues.

The protein belongs to the PTH family. Monomer.

The protein resides in the cytoplasm. It carries out the reaction an N-acyl-L-alpha-aminoacyl-tRNA + H2O = an N-acyl-L-amino acid + a tRNA + H(+). Its function is as follows. Hydrolyzes ribosome-free peptidyl-tRNAs (with 1 or more amino acids incorporated), which drop off the ribosome during protein synthesis, or as a result of ribosome stalling. Functionally, catalyzes the release of premature peptidyl moieties from peptidyl-tRNA molecules trapped in stalled 50S ribosomal subunits, and thus maintains levels of free tRNAs and 50S ribosomes. The chain is Peptidyl-tRNA hydrolase from Cereibacter sphaeroides (strain ATCC 17029 / ATH 2.4.9) (Rhodobacter sphaeroides).